The primary structure comprises 315 residues: Replication factor C small subunit (315 aa).

43-50 (GSPGVGKT) serves as a coordination point for ATP.

Belongs to the activator 1 small subunits family. RfcS subfamily. In terms of assembly, heteromultimer composed of small subunits (RfcS) and large subunits (RfcL).

Part of the RFC clamp loader complex which loads the PCNA sliding clamp onto DNA. The protein is Replication factor C small subunit of Methanococcus maripaludis (strain DSM 14266 / JCM 13030 / NBRC 101832 / S2 / LL).